The sequence spans 330 residues: ADP-L-glycero-D-manno-heptose-6-epimerase (330 aa).

Residues 10–11, 31–32, Lys-38, Lys-53, 74–78, and Asn-91 each bind NADP(+); these read FI, DD, and QGACS. Tyr-138 (proton acceptor) is an active-site residue. NADP(+) is bound at residue Lys-142. Residue Asn-167 coordinates substrate. 2 residues coordinate NADP(+): Val-168 and Lys-176. Lys-176 acts as the Proton acceptor in catalysis. Residues Arg-178, His-185, 199-202, Arg-212, and Tyr-291 each bind substrate; that span reads FAGW.

It belongs to the NAD(P)-dependent epimerase/dehydratase family. HldD subfamily. In terms of assembly, homopentamer. It depends on NADP(+) as a cofactor.

It catalyses the reaction ADP-D-glycero-beta-D-manno-heptose = ADP-L-glycero-beta-D-manno-heptose. The protein operates within nucleotide-sugar biosynthesis; ADP-L-glycero-beta-D-manno-heptose biosynthesis; ADP-L-glycero-beta-D-manno-heptose from D-glycero-beta-D-manno-heptose 7-phosphate: step 4/4. Catalyzes the interconversion between ADP-D-glycero-beta-D-manno-heptose and ADP-L-glycero-beta-D-manno-heptose via an epimerization at carbon 6 of the heptose. The chain is ADP-L-glycero-D-manno-heptose-6-epimerase from Bordetella petrii (strain ATCC BAA-461 / DSM 12804 / CCUG 43448).